We begin with the raw amino-acid sequence, 25 residues long: SEDCTPWTATPITVLAGCRDYVGEQ.

As to quaternary structure, monomer or homodimer. May exist both in a glycosylated and in an unglycosylated form.

It localises to the secreted. In terms of biological role, inhibits alpha-amylases but not trypsin. Is more effective against insect alpha-amylases than those of mammals. In Secale cereale (Rye), this protein is Alpha-amylase inhibitor.